The following is a 375-amino-acid chain: Succinyl-diaminopimelate desuccinylase (375 aa).

His66 is a Zn(2+) binding site. Asp68 is an active-site residue. Asp99 is a binding site for Zn(2+). The Proton acceptor role is filled by Glu133. Residues Glu134, Glu162, and His348 each contribute to the Zn(2+) site.

The protein belongs to the peptidase M20A family. DapE subfamily. Homodimer. The cofactor is Zn(2+). Requires Co(2+) as cofactor.

It catalyses the reaction N-succinyl-(2S,6S)-2,6-diaminopimelate + H2O = (2S,6S)-2,6-diaminopimelate + succinate. Its pathway is amino-acid biosynthesis; L-lysine biosynthesis via DAP pathway; LL-2,6-diaminopimelate from (S)-tetrahydrodipicolinate (succinylase route): step 3/3. Its function is as follows. Catalyzes the hydrolysis of N-succinyl-L,L-diaminopimelic acid (SDAP), forming succinate and LL-2,6-diaminopimelate (DAP), an intermediate involved in the bacterial biosynthesis of lysine and meso-diaminopimelic acid, an essential component of bacterial cell walls. The protein is Succinyl-diaminopimelate desuccinylase of Herminiimonas arsenicoxydans.